The chain runs to 311 residues: Mycinamicin-resistance protein MyrB (311 aa).

S-adenosyl-L-methionine is bound by residues N27, L29, G54, E75, and D98. The disordered stretch occupies residues 272 to 311 (PAPAGRSVRARPGSVGPDRSLPPRGLRSGPPRARRRGGGA). The segment covering 293–302 (PPRGLRSGPP) has biased composition (low complexity).

The protein belongs to the class I-like SAM-binding methyltransferase superfamily. rRNA adenine N(6)-methyltransferase family.

In terms of biological role, confers resistance to macrolide, lincosamide and streptogramin B antibiotics. In Micromonospora griseorubida, this protein is Mycinamicin-resistance protein MyrB (myrB).